The following is a 260-amino-acid chain: Shikimate dehydrogenase (NADP(+)) (260 aa).

Residues 14–16 (SAS) and threonine 60 contribute to the shikimate site. Lysine 64 functions as the Proton acceptor in the catalytic mechanism. Shikimate-binding residues include asparagine 85 and aspartate 100. NADP(+) contacts are provided by residues 121-125 (GAGGA), 145-150 (NRTYER), and phenylalanine 201. Shikimate is bound at residue tyrosine 203. Glycine 225 serves as a coordination point for NADP(+).

This sequence belongs to the shikimate dehydrogenase family. As to quaternary structure, homodimer.

The enzyme catalyses shikimate + NADP(+) = 3-dehydroshikimate + NADPH + H(+). It participates in metabolic intermediate biosynthesis; chorismate biosynthesis; chorismate from D-erythrose 4-phosphate and phosphoenolpyruvate: step 4/7. In terms of biological role, involved in the biosynthesis of the chorismate, which leads to the biosynthesis of aromatic amino acids. Catalyzes the reversible NADPH linked reduction of 3-dehydroshikimate (DHSA) to yield shikimate (SA). This Pyrobaculum islandicum (strain DSM 4184 / JCM 9189 / GEO3) protein is Shikimate dehydrogenase (NADP(+)).